Reading from the N-terminus, the 541-residue chain is Chaperonin GroEL (541 aa).

Residues 29–32 (TLGP), 86–90 (DGTTT), Gly413, and Asp494 each bind ATP.

It belongs to the chaperonin (HSP60) family. As to quaternary structure, forms a cylinder of 14 subunits composed of two heptameric rings stacked back-to-back. Interacts with the co-chaperonin GroES.

It localises to the cytoplasm. The catalysed reaction is ATP + H2O + a folded polypeptide = ADP + phosphate + an unfolded polypeptide.. Together with its co-chaperonin GroES, plays an essential role in assisting protein folding. The GroEL-GroES system forms a nano-cage that allows encapsulation of the non-native substrate proteins and provides a physical environment optimized to promote and accelerate protein folding. This is Chaperonin GroEL from Acetivibrio thermocellus (strain ATCC 27405 / DSM 1237 / JCM 9322 / NBRC 103400 / NCIMB 10682 / NRRL B-4536 / VPI 7372) (Clostridium thermocellum).